The chain runs to 361 residues: Anthranilate phosphoribosyltransferase (361 aa).

Residues G80, 83–84 (GD), T88, 90–93 (NVST), 108–116 (KHGNYSVSS), and S120 each bind 5-phospho-alpha-D-ribose 1-diphosphate. Residue G80 coordinates anthranilate. Position 92 (S92) interacts with Mg(2+). N111 lines the anthranilate pocket. R166 serves as a coordination point for anthranilate. Mg(2+) contacts are provided by D224 and E225. A disordered region spans residues 338 to 361 (EGDGEAASTDSAAASTTAGPEDDD). A compositionally biased stretch (low complexity) spans 343-355 (AASTDSAAASTTA).

This sequence belongs to the anthranilate phosphoribosyltransferase family. As to quaternary structure, homodimer. Requires Mg(2+) as cofactor.

The catalysed reaction is N-(5-phospho-beta-D-ribosyl)anthranilate + diphosphate = 5-phospho-alpha-D-ribose 1-diphosphate + anthranilate. Its pathway is amino-acid biosynthesis; L-tryptophan biosynthesis; L-tryptophan from chorismate: step 2/5. In terms of biological role, catalyzes the transfer of the phosphoribosyl group of 5-phosphorylribose-1-pyrophosphate (PRPP) to anthranilate to yield N-(5'-phosphoribosyl)-anthranilate (PRA). This is Anthranilate phosphoribosyltransferase from Halorubrum lacusprofundi (strain ATCC 49239 / DSM 5036 / JCM 8891 / ACAM 34).